The chain runs to 220 residues: Response regulator ArlR (220 aa).

The region spanning 3–116 (KILIVEDEQN…ELLARIRAML (114 aa)) is the Response regulatory domain. Asp52 bears the 4-aspartylphosphate mark. A DNA-binding region (ompR/PhoB-type) is located at residues 122–220 (KNLIDIKGII…VRGVGYVVRQ (99 aa)).

In terms of processing, phosphorylated by ArlS.

It is found in the cytoplasm. Member of the two-component regulatory system ArlS/ArlR. The polypeptide is Response regulator ArlR (arlR) (Staphylococcus saprophyticus subsp. saprophyticus (strain ATCC 15305 / DSM 20229 / NCIMB 8711 / NCTC 7292 / S-41)).